Here is a 374-residue protein sequence, read N- to C-terminus: uncharacterized protein (374 aa).

Positions 1–46 (MVNEEEKDLTAEGDSNNTGVSPDSIKNKTLDFYPKEKTTERKTRSR) are disordered. A compositionally biased stretch (basic and acidic residues) spans 25–46 (IKNKTLDFYPKEKTTERKTRSR). 6 helical membrane-spanning segments follow: residues 70 to 90 (YAYI…FIAA), 127 to 147 (WVFY…KIGI), 153 to 173 (TIVY…IPVI), 199 to 219 (IWLF…YGLV), 242 to 262 (ISIA…MLAI), and 312 to 332 (YFFG…AITI).

It to M.genitalium MG432 and MG443.

The protein localises to the cell membrane. This is an uncharacterized protein from Spiroplasma citri.